Here is a 750-residue protein sequence, read N- to C-terminus: Photosystem I P700 chlorophyll a apoprotein A1 (750 aa).

Transmembrane regions (helical) follow at residues 70–93, 156–179, 195–219, 291–309, 346–369, 385–411, 433–455, and 531–549; these read VFSA…FHGA, LYCT…FHYH, LNHH…HVSL, IAHH…GHMY, WHAQ…HHMY, LSLF…IFMV, AIIS…LYIH, and FLVH…LILL. [4Fe-4S] cluster-binding residues include C573 and C582. Transmembrane regions (helical) follow at residues 589-610 and 664-686; these read HVFL…HFSW and LSAY…MFLF. H675 provides a ligand contact to chlorophyll a'. Chlorophyll a-binding residues include M683 and Y691. W692 provides a ligand contact to phylloquinone. A helical membrane pass occupies residues 724-744; the sequence is AVGVTHYLLGGIATTWAFFLA.

The protein belongs to the PsaA/PsaB family. In terms of assembly, the PsaA/B heterodimer binds the P700 chlorophyll special pair and subsequent electron acceptors. PSI consists of a core antenna complex that captures photons, and an electron transfer chain that converts photonic excitation into a charge separation. The eukaryotic PSI reaction center is composed of at least 11 subunits. Requires P700 is a chlorophyll a/chlorophyll a' dimer, A0 is one or more chlorophyll a, A1 is one or both phylloquinones and FX is a shared 4Fe-4S iron-sulfur center. as cofactor.

Its subcellular location is the plastid. It localises to the chloroplast thylakoid membrane. The enzyme catalyses reduced [plastocyanin] + hnu + oxidized [2Fe-2S]-[ferredoxin] = oxidized [plastocyanin] + reduced [2Fe-2S]-[ferredoxin]. PsaA and PsaB bind P700, the primary electron donor of photosystem I (PSI), as well as the electron acceptors A0, A1 and FX. PSI is a plastocyanin-ferredoxin oxidoreductase, converting photonic excitation into a charge separation, which transfers an electron from the donor P700 chlorophyll pair to the spectroscopically characterized acceptors A0, A1, FX, FA and FB in turn. Oxidized P700 is reduced on the lumenal side of the thylakoid membrane by plastocyanin. In Aethionema cordifolium (Lebanon stonecress), this protein is Photosystem I P700 chlorophyll a apoprotein A1.